A 564-amino-acid chain; its full sequence is Arginine--tRNA ligase (564 aa).

Residues 122-132 (PNIAKPFSIGH) carry the 'HIGH' region motif.

It belongs to the class-I aminoacyl-tRNA synthetase family. Monomer.

It is found in the cytoplasm. The enzyme catalyses tRNA(Arg) + L-arginine + ATP = L-arginyl-tRNA(Arg) + AMP + diphosphate. In Lactococcus lactis subsp. cremoris (strain SK11), this protein is Arginine--tRNA ligase.